The sequence spans 286 residues: Phosphatidylserine decarboxylase proenzyme (286 aa).

Residues Asp-88, His-145, and Ser-251 each act as charge relay system; for autoendoproteolytic cleavage activity in the active site. The Schiff-base intermediate with substrate; via pyruvic acid; for decarboxylase activity role is filled by Ser-251. At Ser-251 the chain carries Pyruvic acid (Ser); by autocatalysis.

This sequence belongs to the phosphatidylserine decarboxylase family. PSD-B subfamily. Prokaryotic type I sub-subfamily. Heterodimer of a large membrane-associated beta subunit and a small pyruvoyl-containing alpha subunit. Requires pyruvate as cofactor. Is synthesized initially as an inactive proenzyme. Formation of the active enzyme involves a self-maturation process in which the active site pyruvoyl group is generated from an internal serine residue via an autocatalytic post-translational modification. Two non-identical subunits are generated from the proenzyme in this reaction, and the pyruvate is formed at the N-terminus of the alpha chain, which is derived from the carboxyl end of the proenzyme. The autoendoproteolytic cleavage occurs by a canonical serine protease mechanism, in which the side chain hydroxyl group of the serine supplies its oxygen atom to form the C-terminus of the beta chain, while the remainder of the serine residue undergoes an oxidative deamination to produce ammonia and the pyruvoyl prosthetic group on the alpha chain. During this reaction, the Ser that is part of the protease active site of the proenzyme becomes the pyruvoyl prosthetic group, which constitutes an essential element of the active site of the mature decarboxylase.

It is found in the cell membrane. The catalysed reaction is a 1,2-diacyl-sn-glycero-3-phospho-L-serine + H(+) = a 1,2-diacyl-sn-glycero-3-phosphoethanolamine + CO2. It functions in the pathway phospholipid metabolism; phosphatidylethanolamine biosynthesis; phosphatidylethanolamine from CDP-diacylglycerol: step 2/2. In terms of biological role, catalyzes the formation of phosphatidylethanolamine (PtdEtn) from phosphatidylserine (PtdSer). The sequence is that of Phosphatidylserine decarboxylase proenzyme from Verminephrobacter eiseniae (strain EF01-2).